The sequence spans 354 residues: Probable disease resistance protein At5g45490 (354 aa).

Residues 33-53 adopt a coiled-coil conformation; that stretch reads AKGNLEKKRDDNEEEERLKTE. Residues 45-122 enclose the NB-ARC domain; that stretch reads EEEERLKTES…VYAPRVWVSM (78 aa). 91 to 98 is a binding site for ATP; sequence GEYGVGKT. Residues 328–354 form a disordered region; sequence DDEVGPVGSTHGQTDSSNRQPANQASS. A compositionally biased stretch (polar residues) spans 337-354; that stretch reads THGQTDSSNRQPANQASS.

Possible disease resistance protein. This chain is Probable disease resistance protein At5g45490, found in Arabidopsis thaliana (Mouse-ear cress).